A 369-amino-acid polypeptide reads, in one-letter code: RAB6-interacting golgin (369 aa).

The disordered stretch occupies residues 1–128; that stretch reads MAQGWAGFSE…HNNVEILPPK (128 aa). Residues 11–27 are compositionally biased toward basic and acidic residues; it reads EELRRLKQTKDPFEPQR. Polar residues-rich tracts occupy residues 46 to 61 and 82 to 93; these read EQSQKLGLQDGSTSLL and SPTLPSHFTLTS. The segment covering 106–120 has biased composition (basic and acidic residues); sequence QPKELGLENSHDGHN. Residues 145-297 are a coiled coil; it reads RWEVLQQEQR…EVERLLHEQE (153 aa). The tract at residues 188–369 is necessary for interaction with RCHY1; that stretch reads IQKELQALDD…GNDISAALAT (182 aa). Positions 334 to 369 are disordered; that stretch reads VSPKVDDQCGNSSSIPFLSPNCPNQEGNDISAALAT. Residues 342 to 361 show a composition bias toward polar residues; sequence CGNSSSIPFLSPNCPNQEGN.

It belongs to the GORAB family. In terms of assembly, interacts with SCYL1. Interacts with RCHY1 and RAB6A/RAB6.

The protein localises to the cytoplasm. Its subcellular location is the golgi apparatus. This Homo sapiens (Human) protein is RAB6-interacting golgin (GORAB).